The following is a 355-amino-acid chain: uncharacterized protein (355 aa).

Belongs to the 3-beta-HSD family.

This is an uncharacterized protein from Frog virus 3 (isolate Goorha) (FV-3).